We begin with the raw amino-acid sequence, 277 residues long: Large ribosomal subunit protein uL2 (277 aa).

The segment at 219–277 is disordered; sequence RPQTRGSAMNPVDHPHGGGEGKKNSGRHPVTPWGKPTKGAKTRRKKASDKLIISRRKGK. The segment covering 231–241 has biased composition (basic and acidic residues); sequence DHPHGGGEGKK. The span at 256–277 shows a compositional bias: basic residues; the sequence is KGAKTRRKKASDKLIISRRKGK.

It belongs to the universal ribosomal protein uL2 family. Part of the 50S ribosomal subunit. Forms a bridge to the 30S subunit in the 70S ribosome.

Functionally, one of the primary rRNA binding proteins. Required for association of the 30S and 50S subunits to form the 70S ribosome, for tRNA binding and peptide bond formation. It has been suggested to have peptidyltransferase activity; this is somewhat controversial. Makes several contacts with the 16S rRNA in the 70S ribosome. In Campylobacter curvus (strain 525.92), this protein is Large ribosomal subunit protein uL2.